An 823-amino-acid chain; its full sequence is Protein Jade-3 (823 aa).

The tract at residues 1–40 (MKRHRPVSSSESSDECPSTSFTSSSMYRKKSKNPKEQKKS) is disordered. Low complexity predominate over residues 8 to 20 (SSSESSDECPSTS). Lysine 30, lysine 32, and lysine 35 each carry N6-acetyllysine. A PHD-type 1 zinc finger spans residues 200–250 (DVICDVCRSPDSEEGNDMVFCDKCNVCVHQACYGILKIPEGSWLCRSCVLG). The segment at 252-286 (YPQCVLCPKKGGAMKTTRTGTKWAHVSCALWIPEV) adopts a C2HC pre-PHD-type zinc-finger fold. The PHD-type 2 zinc finger occupies 310 to 366 (LVCNLCKLKTGACIQCSVKSCITAFHVTCAFEHGLEMKTILDEGDEVKFKSFCLKHS). Disordered regions lie at residues 543 to 585 (LKMP…PEEP) and 601 to 631 (KSNCLQTSRSHSRCETKSSSPTPRAPSAEFY). A compositionally biased stretch (basic and acidic residues) spans 549–562 (TSEDCKDSSTETEH). Serine 566 and serine 578 each carry phosphoserine. Position 601 is an N6-acetyllysine (lysine 601). A Phosphoserine modification is found at serine 608. Position 638 is an N6-acetyllysine (lysine 638). The tract at residues 651–676 (SIGNGKNQPNSRVSSSNGLEGNWSGN) is disordered. Position 735 is an N6-acetyllysine (lysine 735). The segment at 756-823 (TGRASYQETD…HPHSHSSMQR (68 aa)) is disordered. Serine 774 and serine 776 each carry phosphoserine. The span at 781 to 809 (EGSKETPRVKRESSDRENPSHDSARECHG) shows a compositional bias: basic and acidic residues.

It belongs to the JADE family. As to quaternary structure, component of the HBO1 complex composed at least of ING4 or ING5, MYST2/HBO1, MEAF6, and one of JADE1, JADE2 and JADE3.

Scaffold subunit of some HBO1 complexes, which have a histone H4 acetyltransferase activity. In Mus musculus (Mouse), this protein is Protein Jade-3 (Jade3).